A 287-amino-acid polypeptide reads, in one-letter code: MKLYAKLLLCSICVAFIAVRWSAPSFNEESLKGARVLVTGASTGIGEQLAYHYARLGAQIVITARRGNVLEQVVSKCREMGAQKAFYIPADMANPSDADLVVKYAIEQLGGLDYLVLNHIGPSPYQMWDGDVQHTRWLLEVNFLSYLQMAQKALPTLEKSKGSIVVVSSLLGKICGPFALPYASTKFALNGFFGGLQNELAMQKSNVSITICILGLIDTDSAMEKIKGYINMTAYPSHEAALQIIQAGATRQSESFYPWYTFYATLFRDWFPYLRDKVIQNSYTYNP.

Residues 1–22 form the signal peptide; it reads MKLYAKLLLCSICVAFIAVRWS. Residues 40-66, 91-92, and 118-120 each bind NADP(+); these read GAST…TARR, DM, and NHI. S169 lines the substrate pocket. Residue Y182 is the Proton acceptor of the active site. Residues 182–186 and 215–221 contribute to the NADP(+) site; these read YASTK and GLIDTDS.

This sequence belongs to the short-chain dehydrogenases/reductases (SDR) family.

It localises to the secreted. The catalysed reaction is cortisone + NADPH + H(+) = cortisol + NADP(+). In terms of biological role, unidirectional NADP(+)-dependent cortisol dehydrogenase (in vitro). The sequence is that of Hydroxysteroid 11-beta-dehydrogenase 1-like protein (hsd11b1l) from Danio rerio (Zebrafish).